The sequence spans 443 residues: Probable glycine dehydrogenase (decarboxylating) subunit 1 (443 aa).

The protein belongs to the GcvP family. N-terminal subunit subfamily. The glycine cleavage system is composed of four proteins: P, T, L and H. In this organism, the P 'protein' is a heterodimer of two subunits.

The catalysed reaction is N(6)-[(R)-lipoyl]-L-lysyl-[glycine-cleavage complex H protein] + glycine + H(+) = N(6)-[(R)-S(8)-aminomethyldihydrolipoyl]-L-lysyl-[glycine-cleavage complex H protein] + CO2. Functionally, the glycine cleavage system catalyzes the degradation of glycine. The P protein binds the alpha-amino group of glycine through its pyridoxal phosphate cofactor; CO(2) is released and the remaining methylamine moiety is then transferred to the lipoamide cofactor of the H protein. The polypeptide is Probable glycine dehydrogenase (decarboxylating) subunit 1 (Nitratidesulfovibrio vulgaris (strain DSM 19637 / Miyazaki F) (Desulfovibrio vulgaris)).